Consider the following 336-residue polypeptide: Probable aquaglyceroporin-2 (336 aa).

The segment at 1 to 46 (MPISTINDSISESSVHKSSIPTKVEMSQNEKYSEAPSEAPTIPPPP) is disordered. The Cytoplasmic segment spans residues 1–64 (MPISTINDSI…RENCQDAFSE (64 aa)). The segment covering 9-19 (SISESSVHKSS) has biased composition (low complexity). Residues 65–85 (FFGTFVLLLFGDGVVAQVVLS) form a helical membrane-spanning segment. Topologically, residues 86–94 (RGTKGDYQS) are extracellular. A helical transmembrane segment spans residues 95-115 (ISWGWGLGVMLGVYVGGKSGG). The Cytoplasmic segment spans residues 116–135 (HLNPAVTLANCLFRGHPWRK). Residues 118–120 (NPA) carry the NPA 1 motif. Residues 136–156 (FPIYAVAQVLGAMAAAAVVYG) form a helical membrane-spanning segment. The Extracellular portion of the chain corresponds to 157–195 (NYKSAIDAYEGGPGIRTVIGENATAGVFCTYPAEFMTRT). An N-linked (GlcNAc...) asparagine glycan is attached at N178. Residues 196-216 (GMFFSEFIASTILQFVIFAMA) traverse the membrane as a helical segment. Over 217 to 223 (DSANIGA) the chain is Cytoplasmic. The chain crosses the membrane as a helical span at residues 224 to 244 (GPLMPLGLFFLIFGIGACFGW). The Extracellular segment spans residues 245 to 280 (ETGYAINLARDFGPRLVSYMLGYGSEVWSAGGYYFW). The short motif at 251–253 (NLA) is the NPA 2 element. Residues 281–301 (IPMVAPFFGCAFGGFLYDVFI) form a helical membrane-spanning segment. Over 302–336 (YTGPSPINTPGMGFGRLVSPRRSTWSNTYNANSPV) the chain is Cytoplasmic.

Belongs to the MIP/aquaporin (TC 1.A.8) family.

Its subcellular location is the membrane. The enzyme catalyses H2O(in) = H2O(out). It catalyses the reaction glycerol(in) = glycerol(out). Its function is as follows. Probable water/glycerol channel that may have redundant functions with FgAQP4. This is Probable aquaglyceroporin-2 from Gibberella zeae (strain ATCC MYA-4620 / CBS 123657 / FGSC 9075 / NRRL 31084 / PH-1) (Wheat head blight fungus).